A 563-amino-acid polypeptide reads, in one-letter code: BOS complex subunit NCLN (563 aa).

The signal sequence occupies residues 1–42; sequence MLEEAGEVLENMLKASCLPLGFIVFLPAVLLLVAPPLPAADA. Residues 43-522 lie on the Lumenal side of the membrane; it reads AHEFTVYRMQ…VMNAYRVKPA (480 aa). 2 N-linked (GlcNAc...) asparagine glycosylation sites follow: Asn-241 and Asn-428. A helical membrane pass occupies residues 523-543; sequence IFDLLLAVCIGAYLGMAYTAV. The Cytoplasmic segment spans residues 544–563; it reads QHFDLLYKTVQRLLVKAKTQ.

Belongs to the nicastrin family. As to quaternary structure, component of the back of Sec61 (BOS) complex, composed of NCLN/Nicalin, NOMO1 and TMEM147. The BOS complex is part of the multi-pass translocon (MPT) complex, composed of three subcomplexes, the GEL complex (composed of RAB5IF/OPTI and TMCO1), the BOS complex (composed of NCLN/Nicalin, NOMO1 and TMEM147) and the PAT complex (composed of WDR83OS/Asterix and CCDC47). The MPT complex associates with the SEC61 complex.

The protein resides in the endoplasmic reticulum membrane. Its function is as follows. Component of the multi-pass translocon (MPT) complex that mediates insertion of multi-pass membrane proteins into the lipid bilayer of membranes. The MPT complex takes over after the SEC61 complex: following membrane insertion of the first few transmembrane segments of proteins by the SEC61 complex, the MPT complex occludes the lateral gate of the SEC61 complex to promote insertion of subsequent transmembrane regions. May antagonize Nodal signaling and subsequent organization of axial structures during mesodermal patterning, via its interaction with NOMO. The polypeptide is BOS complex subunit NCLN (Canis lupus familiaris (Dog)).